The chain runs to 310 residues: Olfactory receptor 8I2 (310 aa).

The Extracellular portion of the chain corresponds to 1–25 (MAGNNFTEVTVFILSGFANHPELQV). N-linked (GlcNAc...) asparagine glycosylation occurs at asparagine 5. Residues 26 to 46 (SLFLMFLFIYLFTVLGNLGLI) form a helical membrane-spanning segment. Residues 47 to 54 (TLIRMDSQ) lie on the Cytoplasmic side of the membrane. A helical transmembrane segment spans residues 55–75 (LHTPMYFFLSNLAFIDIFYSS). Residues 76-99 (TVTPKALVNFQSNRRSISFVGCFV) lie on the Extracellular side of the membrane. Cysteine 97 and cysteine 188 are oxidised to a cystine. A helical membrane pass occupies residues 100-120 (QMYFFVGLVCCECFLLGSMAY). Over 121-139 (NRYIAICNPLLYSVVMSQK) the chain is Cytoplasmic. The helical transmembrane segment at 140-160 (VSNWLGVMPYVIGFTSSLISV) threads the bilayer. Over 161–196 (WVISSLAFCDSSINHFFCDTTALLALSCVDTFGTEM) the chain is Extracellular. A helical membrane pass occupies residues 197 to 216 (VSFVLAGFTLLSSLLIITVT). Topologically, residues 217–236 (YIIIISAILRIQSAAGRQKA) are cytoplasmic. A helical membrane pass occupies residues 237-257 (FSTCASHLMAVTIFYGSLIFT). At 258–270 (YLQPDNTSSLTQA) the chain is on the extracellular side. A helical membrane pass occupies residues 271–291 (QVASVFYTIVIPMLNPLIYSL). Residues 292 to 310 (RNKDVKNALLRVIHRKLFP) are Cytoplasmic-facing.

This sequence belongs to the G-protein coupled receptor 1 family.

The protein localises to the cell membrane. In terms of biological role, odorant receptor. This chain is Olfactory receptor 8I2 (OR8I2), found in Homo sapiens (Human).